A 121-amino-acid chain; its full sequence is Two-component response regulator ORR8 (121 aa).

The Response regulatory domain occupies 5–121; that stretch reads HVLVVDDTHV…VDVPRIMKYI (117 aa). Position 55 is a 4-aspartylphosphate (aspartate 55).

This sequence belongs to the ARR family. Type-A subfamily. Two-component system major event consists of a His-to-Asp phosphorelay between a sensor histidine kinase (HK) and a response regulator (RR). In plants, the His-to-Asp phosphorelay involves an additional intermediate named Histidine-containing phosphotransfer protein (HPt). This multistep phosphorelay consists of a His-Asp-His-Asp sequential transfer of a phosphate group between first a His and an Asp of the HK protein, followed by the transfer to a conserved His of the HPt protein and finally the transfer to an Asp in the receiver domain of the RR protein. As to expression, expressed in mature leaves, and at low levels in roots, shoots and flowers.

Its function is as follows. Functions as a response regulator involved in His-to-Asp phosphorelay signal transduction system. Phosphorylation of the Asp residue in the receiver domain activates the ability of the protein to promote the transcription of target genes. Type-A response regulators seem to act as negative regulators of the cytokinin signaling. This is Two-component response regulator ORR8 from Oryza sativa subsp. indica (Rice).